The sequence spans 159 residues: Prs ADP-ribosylating antitoxin (159 aa).

The segment at 99 to 159 (EDMVEESGET…LAQIQSGAFA (61 aa)) is sufficient to neutralize toxin.

It belongs to the MbcA/ParS/Xre antitoxin family. Forms heterotetrameric ParS(2)-ParT(2) complexes. The 2 antitoxin fragments do not make contact in the crystal structure.

In terms of biological role, antitoxin component of a type II toxin-antitoxin (TA) system. Neutralizes the bacteriostatic effect of cognate toxin ParT by inserting into its active site. This Sphingobium sp. (strain YBL2) protein is Prs ADP-ribosylating antitoxin.